The sequence spans 363 residues: Ribosomal RNA large subunit methyltransferase M (363 aa).

S-adenosyl-L-methionine-binding positions include S194, 227–230 (CPGG), D246, D266, and D284. K313 serves as the catalytic Proton acceptor.

It belongs to the class I-like SAM-binding methyltransferase superfamily. RNA methyltransferase RlmE family. RlmM subfamily. As to quaternary structure, monomer.

Its subcellular location is the cytoplasm. It catalyses the reaction cytidine(2498) in 23S rRNA + S-adenosyl-L-methionine = 2'-O-methylcytidine(2498) in 23S rRNA + S-adenosyl-L-homocysteine + H(+). Functionally, catalyzes the 2'-O-methylation at nucleotide C2498 in 23S rRNA. The protein is Ribosomal RNA large subunit methyltransferase M of Haemophilus influenzae (strain 86-028NP).